The chain runs to 61 residues: MVNLTVGNKNKSFTDQVGGFEWARIQLPESCGNGIFCTNTCYNNKGKRVAPGPVKLKHFWP.

Its subcellular location is the mitochondrion. This is an uncharacterized protein from Marchantia polymorpha (Common liverwort).